Reading from the N-terminus, the 533-residue chain is MSSAKRRLYSLIQNATEPYAFEPDLAVNLDIADLINQTGGNLPREAAFAIVRKVNDRNPTVAYLALNLLDICVKNCGYAFRLQIASKEFLNELVRRFPERPPSRLNKIQVMILSLIEEWRKTICRVDRYKEDLGFIRDMHRLLSYKGYTFPEIDKENLAVLSQKSVLKTAEELEKEDREAMSAKLQELIRRGTPADLAEANKLMKVMAGYDTEQKQKYKEHVLVDLEKVKRKAALFGEMLNEVSESDKLASGDLYDELAYSLKAAQRKVDKILEEMSPEDDSYVTVSDLKSLIASLLTQYDHLLEGDFSSARTVAADNNSLLQATTESAKSNSKTSANASNTQSAMDLLIDLDIGSDAQSPSLPASSSQMPTSSFNMESLSQSLLGTVEAPAEVGAISLTESFNSPVSNSSPNVPINNFTSTCAFENSHLNFQITPKSKTRDQVVLLATYTNLSPYDTVENLQSFIAVPKKYNLVLQPQSGTNLSPLQKDGIYQEMIVTKLLDVTELPVRFKLTYKVNGRSQEYTGQSSIRLL.

A VHS domain is found at 15-151 (ATEPYAFEPD…LLSYKGYTFP (137 aa)). The GAT domain maps to 178–305 (REAMSAKLQE…LLTQYDHLLE (128 aa)). Ser-320 carries the post-translational modification Phosphoserine. The region spanning 417–532 (NNFTSTCAFE…EYTGQSSIRL (116 aa)) is the GAE domain.

This sequence belongs to the GGA protein family.

Its subcellular location is the golgi apparatus. It is found in the trans-Golgi network. May play a role in the regulation of membrane traffic through the trans-Golgi network. This chain is Probable ADP-ribosylation factor-binding protein C25H2.16c, found in Schizosaccharomyces pombe (strain 972 / ATCC 24843) (Fission yeast).